Reading from the N-terminus, the 543-residue chain is Headcase protein homolog (543 aa).

Disordered regions lie at residues 1–26 (MPNP…QENG) and 197–283 (MQDE…LSPA). Basic and acidic residues-rich tracts occupy residues 197 to 211 (MQDE…EKNT) and 235 to 250 (PSHD…RQNS). 2 positions are modified to phosphoserine: Ser264 and Ser268.

As to expression, expressed in all tissues examined. Highest levels are in the spleen, thymus, peripheral blood and heart. Lowest in the kidney and pancreas.

In terms of biological role, may play an important role in some human cancers. May be part of the regulatory mechanism in the development of epithelial tube networks such as the circulatory system and lungs. The protein is Headcase protein homolog (HECA) of Homo sapiens (Human).